A 381-amino-acid polypeptide reads, in one-letter code: Erythronate-4-phosphate dehydrogenase (381 aa).

Residues serine 45 and threonine 66 each coordinate substrate. NAD(+) is bound by residues aspartate 146, threonine 174, 205-207 (ASR), and aspartate 231. Residue arginine 207 is part of the active site. Glutamate 236 is an active-site residue. The Proton donor role is filled by histidine 253. Residue glycine 256 coordinates NAD(+). Residue tyrosine 257 coordinates substrate.

This sequence belongs to the D-isomer specific 2-hydroxyacid dehydrogenase family. PdxB subfamily. Homodimer.

It localises to the cytoplasm. The catalysed reaction is 4-phospho-D-erythronate + NAD(+) = (R)-3-hydroxy-2-oxo-4-phosphooxybutanoate + NADH + H(+). It participates in cofactor biosynthesis; pyridoxine 5'-phosphate biosynthesis; pyridoxine 5'-phosphate from D-erythrose 4-phosphate: step 2/5. In terms of biological role, catalyzes the oxidation of erythronate-4-phosphate to 3-hydroxy-2-oxo-4-phosphonooxybutanoate. The polypeptide is Erythronate-4-phosphate dehydrogenase (Stutzerimonas stutzeri (strain A1501) (Pseudomonas stutzeri)).